A 100-amino-acid polypeptide reads, in one-letter code: Tachykinin-4 (100 aa).

Positions 1 to 19 are cleaved as a signal peptide; the sequence is MPSSVTLLLLMGLSVCTSA. Propeptides lie at residues 20–55 and 85–100; these read EDGGEEQTLGAEAGPWVTVTLEAGAVASIQLQLQEV and RASSTKGSVDEDQGAE. Residues 80–100 form a disordered region; the sequence is GLLGRRASSTKGSVDEDQGAE.

It belongs to the tachykinin family.

It localises to the secreted. Its function is as follows. Tachykinins are active peptides which excite neurons, evoke behavioral responses, are potent vasodilators and secretagogues, and contract (directly or indirectly) many smooth muscles. The chain is Tachykinin-4 from Oryctolagus cuniculus (Rabbit).